The following is a 152-amino-acid chain: Siroheme decarboxylase beta subunit (152 aa).

The protein belongs to the Ahb/Nir family. In terms of assembly, forms a heterodimer composed of AhbA and AhbB.

It carries out the reaction siroheme + 2 H(+) = 12,18-didecarboxysiroheme + 2 CO2. It participates in porphyrin-containing compound metabolism; protoheme biosynthesis. Binds heme b. The redox state of the heme b modulates the activity of the enzyme. Activity is stimulated by sodium dithionite. In terms of biological role, involved in siroheme-dependent heme b biosynthesis. Catalyzes the decarboxylation of siroheme into didecarboxysiroheme. This Methanosarcina barkeri (strain Fusaro / DSM 804) protein is Siroheme decarboxylase beta subunit.